Consider the following 162-residue polypeptide: Regulator of sigma D (162 aa).

The protein belongs to the Rsd/AlgQ family. As to quaternary structure, interacts with RpoD.

The protein resides in the cytoplasm. Functionally, binds RpoD and negatively regulates RpoD-mediated transcription activation by preventing the interaction between the primary sigma factor RpoD with the catalytic core of the RNA polymerase and with promoter DNA. May be involved in replacement of the RNA polymerase sigma subunit from RpoD to RpoS during the transition from exponential growth to the stationary phase. The protein is Regulator of sigma D of Salmonella arizonae (strain ATCC BAA-731 / CDC346-86 / RSK2980).